A 124-amino-acid polypeptide reads, in one-letter code: MADLKKLAEEIVGLTLLEAQELKNILKDEYGIEPAAGGAVMVAGPAAGPAEAAEEKTEFDVVLVDAGANKINVIKEVRGITGLGLKEAKDLVEAGGKVKEGASKADAEEMKKKLEAAGAKVELK.

The protein belongs to the bacterial ribosomal protein bL12 family. Homodimer. Part of the ribosomal stalk of the 50S ribosomal subunit. Forms a multimeric L10(L12)X complex, where L10 forms an elongated spine to which 2 to 4 L12 dimers bind in a sequential fashion. Binds GTP-bound translation factors.

Its function is as follows. Forms part of the ribosomal stalk which helps the ribosome interact with GTP-bound translation factors. Is thus essential for accurate translation. This Paracoccus denitrificans (strain Pd 1222) protein is Large ribosomal subunit protein bL12.